A 541-amino-acid polypeptide reads, in one-letter code: Protein panoramix (541 aa).

Positions 1–169 are interaction with Piwi; sequence MEAPMKLEVK…TLVPDEQQSF (169 aa). 2 disordered regions span residues 52–75 and 198–281; these read SDPEDGNLVHHSATPTSDEHLQPS and TAEN…TELD. Positions 194-216 form a coiled coil; the sequence is MLEMTAENRKVKHKKKKHKKERS. Over residues 203-220 the composition is skewed to basic residues; it reads KVKHKKKKHKKERSHRSN. Basic and acidic residues-rich tracts occupy residues 241–251 and 269–279; these read DDKNQFDCDYR and SSKERKLRDTE. Positions 315–343 are nxf2-interacting region (NIR); sequence LSKADKRSLAVARAELVLEQIQQKANKEE. The stretch at 323-343 forms a coiled coil; that stretch reads LAVARAELVLEQIQQKANKEE. The necessary for interaction with nxf2 and protein stability stretch occupies residues 387 to 446; sequence TPGTRIDLSKWGLETVPEATKRLLRLLGIDVARLKELQSTVKPSQRILKLKKEQLEQGLA.

As to quaternary structure, in the ovaries, part of a complex composed of at least Panx, nxf2, piwi and Nxt1. The complex is knowns as Panx-induced cotranscriptional silencing (PICTS) complex, Panx-nxf2-dependent TAP/p15 silencing (Pandas complex), SFiNX (silencing factor interacting nuclear export variant) or piwi-Panx-nxf2-p15 (PPNP) complex. Interacts (via NIR region) with nxf2 (via TAP-C domain); the interaction is direct. As to expression, expressed in female gonads (at protein level).

The protein resides in the nucleus. In terms of biological role, acts via the piwi-interacting RNA (piRNA) pathway which mediates the repression of transposable elements during meiosis by forming complexes composed of piRNAs and piwi proteins and governs the methylation and subsequent repression of transposons. Required for transcriptional silencing of transposons targeted by piwi and confers its effects by interacting with nascent RNA transcripts. Likely to be recruited to nascent transcripts cotranscriptionally by piwi and to recruit additional factors involved in transcriptional silencing. In the ovaries, forms a complex with nxf2, piwi and Nxt1 which acts as effectors of cotranscriptional transposon silencing. The interaction with nxf2 stabilizes the nuclear protein complex. The polypeptide is Protein panoramix (Drosophila melanogaster (Fruit fly)).